Here is a 228-residue protein sequence, read N- to C-terminus: Thymidine kinase (228 aa).

Residue 23 to 30 participates in ATP binding; the sequence is GNIGCGKS. Glutamate 50 acts as the Proton acceptor in catalysis. Tyrosine 68, glutamine 79, and phenylalanine 109 together coordinate substrate. Arginine 157 contacts ATP.

This sequence belongs to the DCK/DGK family.

It catalyses the reaction thymidine + ATP = dTMP + ADP + H(+). The sequence is that of Thymidine kinase (TK) from Ictaluridae (bullhead catfishes).